The chain runs to 828 residues: Periplasmic nitrate reductase (828 aa).

Residues 1–31 (MKLSRRSFMKANAVAAAAAAAGLSVPGVARA) constitute a signal peptide (tat-type signal). Positions 39 to 95 (IKWDKAPCRFCGTGCGVLVGTQQGRVVACQGDPDAPVNRGLNCIKGYFLPKIMYGKD) constitute a 4Fe-4S Mo/W bis-MGD-type domain. Residues Cys-46, Cys-49, Cys-53, and Cys-81 each contribute to the [4Fe-4S] cluster site. Residues Lys-83, Gln-150, Asn-175, Cys-179, 212-219 (WGSNMAEM), 243-247 (STFQH), 262-264 (QSD), Met-372, Gln-376, Asn-482, 508-509 (SD), Lys-531, Asp-558, and 718-727 (TGRVLEHWHT) contribute to the Mo-bis(molybdopterin guanine dinucleotide) site. Phe-794 is a binding site for substrate. Positions 802 and 819 each coordinate Mo-bis(molybdopterin guanine dinucleotide).

It belongs to the prokaryotic molybdopterin-containing oxidoreductase family. NasA/NapA/NarB subfamily. As to quaternary structure, component of the periplasmic nitrate reductase NapAB complex composed of NapA and NapB. Requires [4Fe-4S] cluster as cofactor. Mo-bis(molybdopterin guanine dinucleotide) is required as a cofactor. Predicted to be exported by the Tat system. The position of the signal peptide cleavage has not been experimentally proven.

It localises to the periplasm. It catalyses the reaction 2 Fe(II)-[cytochrome] + nitrate + 2 H(+) = 2 Fe(III)-[cytochrome] + nitrite + H2O. Its function is as follows. Catalytic subunit of the periplasmic nitrate reductase complex NapAB. Receives electrons from NapB and catalyzes the reduction of nitrate to nitrite. In Salmonella paratyphi C (strain RKS4594), this protein is Periplasmic nitrate reductase.